A 297-amino-acid polypeptide reads, in one-letter code: Vacuolar protein sorting-associated protein 26C (297 aa).

The protein belongs to the VPS26 family. In terms of assembly, component of the commander complex that is essential for endosomal recycling of transmembrane cargos; the commander complex is composed of the CCC subcomplex and the retriever subcomplex. Component of the heterotrimeric retriever complex consisting of VPS26C, VPS29 and VPS35L; within the complex interacts with VPS35L. Interacts with SNX17 (via C-terminus); the interaction is direct and associates SNX17 with the retriever complex. Interacts with SNX31; the interaction is direct. Ubiquitously expressed.

The protein resides in the endosome. Component of the commander complex that is essential for endosomal recycling of transmembrane cargos; the commander complex is composed of the CCC subcomplex and the retriever subcomplex. Component of the retriever complex, which is a heterotrimeric complex related to retromer cargo-selective complex (CSC) and essential for retromer-independent retrieval and recycling of numerous cargos such as integrin alpha-5/beta-1 (ITGA5:ITGB1). The recruitment of the retriever complex to the endosomal membrane involves CCC and WASH complexes. In the endosomes, drives the retriever and recycling of NxxY-motif-containing cargo proteins by coupling to SNX17, a cargo essential for the homeostatic maintenance of numerous cell surface proteins associated with processes that include cell migration, cell adhesion, nutrient supply and cell signaling. In terms of biological role, (Microbial infection) The heterotrimeric retriever complex, in collaboration with the CCC complex, mediates the exit of human papillomavirus to the cell surface. This chain is Vacuolar protein sorting-associated protein 26C, found in Homo sapiens (Human).